A 124-amino-acid polypeptide reads, in one-letter code: Small ribosomal subunit protein uS12 (124 aa).

Positions 9–28 (KSERTVQKNQTKSPALDSCP) are disordered. The residue at position 89 (Asp89) is a 3-methylthioaspartic acid.

It belongs to the universal ribosomal protein uS12 family. Part of the 30S ribosomal subunit. Contacts proteins S8 and S17. May interact with IF1 in the 30S initiation complex.

With S4 and S5 plays an important role in translational accuracy. Functionally, interacts with and stabilizes bases of the 16S rRNA that are involved in tRNA selection in the A site and with the mRNA backbone. Located at the interface of the 30S and 50S subunits, it traverses the body of the 30S subunit contacting proteins on the other side and probably holding the rRNA structure together. The combined cluster of proteins S8, S12 and S17 appears to hold together the shoulder and platform of the 30S subunit. The polypeptide is Small ribosomal subunit protein uS12 (Bdellovibrio bacteriovorus (strain ATCC 15356 / DSM 50701 / NCIMB 9529 / HD100)).